A 667-amino-acid chain; its full sequence is Probable E3 ubiquitin-protein ligase HIP1 (667 aa).

2 disordered regions span residues 142–163 (NGAS…NGQA) and 285–311 (TTAG…RSFR). Over residues 288–309 (GLSSSSYDPSGGNNNSGGSQRS) the composition is skewed to low complexity. The segment at 620–661 (CCICQEEYVDGDDLGTLDCGHDFHVGCVRQWLVVKNTCPICK) adopts an RING-type; atypical zinc-finger fold.

Belongs to the RING-type zinc finger family. As to quaternary structure, interacts with HAL3.

It carries out the reaction S-ubiquitinyl-[E2 ubiquitin-conjugating enzyme]-L-cysteine + [acceptor protein]-L-lysine = [E2 ubiquitin-conjugating enzyme]-L-cysteine + N(6)-ubiquitinyl-[acceptor protein]-L-lysine.. The protein operates within protein modification; protein ubiquitination. Its function is as follows. Probable E3 ubiquitin-protein ligase that functions downstream of HAL3 and is required for HAL3-regulated plant growth. Activation of HIP1 by HAL3 may lead to the degradation of cell cycle suppressors, resulting in enhancement of cell division and plant growth. The sequence is that of Probable E3 ubiquitin-protein ligase HIP1 (HIP1) from Oryza sativa subsp. japonica (Rice).